Here is a 318-residue protein sequence, read N- to C-terminus: MSVWAIGDLQGCYDITQRLLEKINFDPAQDTLWFCGDLVNRGGQSLETLRLVHSLRAHSVVVLGNHDLSLLAIGARSEEEQRKVNPDLLRIVLAEDRDALLDWLRMQKLAHVDRALGWMMIHAGLAPKWTTQMAEKHAREVEQQLQGGGYRKLLRNMYGDQPGWSPGLIGYDRSRAIINLFTRMRYCTPRGRIATDDKGTPGTQAQGLYPWFEVPGRVERDLKIVCGHWSALGLTITQGVHAIDTGAVWGGKLTALQLDTDELRVVQVPGREVTGPAPVARAPRRPRERLGRQRSRGNRGNAGNTAVPAKPQVDTPQD.

The segment at 269–318 (PGREVTGPAPVARAPRRPRERLGRQRSRGNRGNAGNTAVPAKPQVDTPQD) is disordered. The span at 282–297 (APRRPRERLGRQRSRG) shows a compositional bias: basic residues.

The protein belongs to the Ap4A hydrolase family.

The enzyme catalyses P(1),P(4)-bis(5'-adenosyl) tetraphosphate + H2O = 2 ADP + 2 H(+). In terms of biological role, hydrolyzes diadenosine 5',5'''-P1,P4-tetraphosphate to yield ADP. In Xanthomonas oryzae pv. oryzae (strain KACC10331 / KXO85), this protein is Bis(5'-nucleosyl)-tetraphosphatase, symmetrical.